The following is a 413-amino-acid chain: Multifunctional CCA protein (413 aa).

2 residues coordinate ATP: Gly-8 and Arg-11. 2 residues coordinate CTP: Gly-8 and Arg-11. Mg(2+) contacts are provided by Asp-21 and Asp-23. ATP contacts are provided by Arg-91, Arg-143, and Arg-146. Residues Arg-91, Arg-143, and Arg-146 each coordinate CTP. In terms of domain architecture, HD spans 232-333 (TGVHVMMVVD…VRLFERSDAL (102 aa)).

Belongs to the tRNA nucleotidyltransferase/poly(A) polymerase family. Bacterial CCA-adding enzyme type 1 subfamily. As to quaternary structure, monomer. Can also form homodimers and oligomers. The cofactor is Mg(2+). Ni(2+) is required as a cofactor.

The catalysed reaction is a tRNA precursor + 2 CTP + ATP = a tRNA with a 3' CCA end + 3 diphosphate. The enzyme catalyses a tRNA with a 3' CCA end + 2 CTP + ATP = a tRNA with a 3' CCACCA end + 3 diphosphate. Functionally, catalyzes the addition and repair of the essential 3'-terminal CCA sequence in tRNAs without using a nucleic acid template. Adds these three nucleotides in the order of C, C, and A to the tRNA nucleotide-73, using CTP and ATP as substrates and producing inorganic pyrophosphate. tRNA 3'-terminal CCA addition is required both for tRNA processing and repair. Also involved in tRNA surveillance by mediating tandem CCA addition to generate a CCACCA at the 3' terminus of unstable tRNAs. While stable tRNAs receive only 3'-terminal CCA, unstable tRNAs are marked with CCACCA and rapidly degraded. In Burkholderia vietnamiensis (strain G4 / LMG 22486) (Burkholderia cepacia (strain R1808)), this protein is Multifunctional CCA protein.